The chain runs to 299 residues: Prolyl 4-hydroxylase 2 (299 aa).

Topologically, residues 1-5 are cytoplasmic; it reads MSMSR. A helical; Signal-anchor for type II membrane protein membrane pass occupies residues 6–26; sequence LGLLLFVAILLVLLQSSTCLI. At 27–299 the chain is on the lumenal side; that stretch reads SSPSSIINPS…GNCRRSCKAC (273 aa). Residues 121–246 enclose the Fe2OG dioxygenase domain; the sequence is NGEDLQVLRY…KWSATKWIHV (126 aa). Positions 139 and 141 each coordinate Fe cation. N165 is a glycosylation site (N-linked (GlcNAc...) asparagine). H227 serves as a coordination point for Fe cation. K237 contacts 2-oxoglutarate. N-linked (GlcNAc...) asparagine glycosylation is found at N258 and N263. In terms of domain architecture, ShKT spans 259 to 299; the sequence is CTDVNESCERWAVLGECGKNPEYMVGTPEIPGNCRRSCKAC. 3 disulfide bridges follow: C259–C299, C266–C292, and C275–C296.

Belongs to the P4HA family. Requires Fe(2+) as cofactor. L-ascorbate serves as cofactor. As to expression, expressed in epidermal root hair cells (trichoblasts).

The protein localises to the endoplasmic reticulum membrane. The protein resides in the golgi apparatus membrane. It carries out the reaction L-prolyl-[collagen] + 2-oxoglutarate + O2 = trans-4-hydroxy-L-prolyl-[collagen] + succinate + CO2. Its function is as follows. Catalyzes the post-translational formation of 4-hydroxyproline in -Xaa-Pro-Gly- sequences in proline-rich peptide sequences of plant glycoproteins and other proteins. Hydroxyprolines are important constituent of many plant cell wall glycoproteins such as extensins, hydroxyproline-rich glycoproteins, lectins and arabinogalactan proteins. Possesses high affinity for leucine-rich repeat and proline-rich extensins of root cell walls that are essential for root hair development. Hydroxyprolines define the subsequent O-glycosylation sites by arabinosyltransferases which elongate the O-arabinosides on extensins. Has low affinity for the substrates tested in vitro. The chain is Prolyl 4-hydroxylase 2 from Arabidopsis thaliana (Mouse-ear cress).